Consider the following 300-residue polypeptide: Jacalin-related lectin 33 (300 aa).

Residues 1–20 (MAQKVEAGGGAGGASWDDGV) are disordered. Position 2 is an N-acetylalanine (A2). 2 consecutive Jacalin-type lectin domains span residues 2-146 (AQKV…YFAT) and 154-297 (AKKL…HVMP).

The protein belongs to the jacalin lectin family. In terms of assembly, component of the PYK10 complex, at least composed of PYK10/BGLU23, BGLU21, BGLU22, JAL22, JAL23, PBP1/JAL30, PBP2/JAL31, JAL32, JAL33, JAL34, JAL35, GLL22 and GLL23.

In terms of biological role, sugar-binding protein showing significant affinity for (Glc alpha(1-4)Glc)(3) maltohexaose, (Glc alpha(1-6)Glc)(3) isomaltohexaose, Gal alpha(1-4)Gal beta(1-4)Glc, GalNAc alpha(1-3)(Fuc alpha(1-2)) and Gal beta(1-3)(Fuc alpha(1-4))GlcNAc beta(1-3)Gal beta(1-4)Glc. The chain is Jacalin-related lectin 33 (JAL33) from Arabidopsis thaliana (Mouse-ear cress).